The sequence spans 130 residues: Hypocretin neuropeptide precursor (130 aa).

Residues 1–32 form the signal peptide; that stretch reads MNFPSTKVPWAAVTLLLLLLLPPALLSLGVDA. Position 33 is a pyrrolidone carboxylic acid (glutamine 33). 2 disulfides stabilise this stretch: cysteine 38-cysteine 44 and cysteine 39-cysteine 46. The residue at position 65 (leucine 65) is a Leucine amide. Methionine 96 is modified (methionine amide). A propeptide spanning residues 97–130 is cleaved from the precursor; the sequence is GRRAGAELEPHPCSGRGCPTVTTTALAPRGGSGV.

The protein belongs to the orexin family. In terms of processing, specific enzymatic cleavages at paired basic residues yield the different active peptides. Restricted to neuronal cell bodies of the dorsal and lateral hypothalamus.

It localises to the rough endoplasmic reticulum. Its subcellular location is the cytoplasmic vesicle. It is found in the synapse. Functionally, neuropeptides that play a significant role in the regulation of food intake and sleep-wakefulness, possibly by coordinating the complex behavioral and physiologic responses of these complementary homeostatic functions. A broader role in the homeostatic regulation of energy metabolism, autonomic function, hormonal balance and the regulation of body fluids, is also suggested. In terms of biological role, binds to orexin receptors HCRTR1/OX1R and HCRTR2/OX2R with a high affinity. Stimulates food intake. Modulates pituitary luteinizing hormone secretion in an ovarian steroid-dependent manner. Its function is as follows. Binds to orexin receptor HCRTR2/OX2R only. Stimulates food intake. Modulates pituitary luteinizing hormone secretion in an ovarian steroid-dependent manner. In Mus musculus (Mouse), this protein is Hypocretin neuropeptide precursor (Hcrt).